The following is a 313-amino-acid chain: Acetyl-coenzyme A carboxylase carboxyl transferase subunit alpha (313 aa).

One can recognise a CoA carboxyltransferase C-terminal domain in the interval 34-288; the sequence is KLKDQRDIAL…KNVVLEAVNE (255 aa).

This sequence belongs to the AccA family. In terms of assembly, acetyl-CoA carboxylase is a heterohexamer composed of biotin carboxyl carrier protein (AccB), biotin carboxylase (AccC) and two subunits each of ACCase subunit alpha (AccA) and ACCase subunit beta (AccD).

The protein resides in the cytoplasm. It carries out the reaction N(6)-carboxybiotinyl-L-lysyl-[protein] + acetyl-CoA = N(6)-biotinyl-L-lysyl-[protein] + malonyl-CoA. Its pathway is lipid metabolism; malonyl-CoA biosynthesis; malonyl-CoA from acetyl-CoA: step 1/1. Its function is as follows. Component of the acetyl coenzyme A carboxylase (ACC) complex. First, biotin carboxylase catalyzes the carboxylation of biotin on its carrier protein (BCCP) and then the CO(2) group is transferred by the carboxyltransferase to acetyl-CoA to form malonyl-CoA. The polypeptide is Acetyl-coenzyme A carboxylase carboxyl transferase subunit alpha (Fusobacterium nucleatum subsp. nucleatum (strain ATCC 25586 / DSM 15643 / BCRC 10681 / CIP 101130 / JCM 8532 / KCTC 2640 / LMG 13131 / VPI 4355)).